Reading from the N-terminus, the 400-residue chain is Elongation factor Tu (400 aa).

One can recognise a tr-type G domain in the interval 10 to 209 (KPHVNIGTIG…VVDKYIPTPQ (200 aa)). The tract at residues 19-26 (GHVDHGKT) is G1. 19–26 (GHVDHGKT) serves as a coordination point for GTP. Thr26 is a binding site for Mg(2+). Residues 60 to 64 (GITIN) form a G2 region. A G3 region spans residues 81 to 84 (DCPG). Residues 81–85 (DCPGH) and 136–139 (NKVD) each bind GTP. The segment at 136–139 (NKVD) is G4. The interval 174–176 (SAL) is G5.

It belongs to the TRAFAC class translation factor GTPase superfamily. Classic translation factor GTPase family. EF-Tu/EF-1A subfamily. Monomer.

The protein resides in the cytoplasm. It carries out the reaction GTP + H2O = GDP + phosphate + H(+). In terms of biological role, GTP hydrolase that promotes the GTP-dependent binding of aminoacyl-tRNA to the A-site of ribosomes during protein biosynthesis. This is Elongation factor Tu from Caldicellulosiruptor saccharolyticus (strain ATCC 43494 / DSM 8903 / Tp8T 6331).